The chain runs to 131 residues: C-type natriuretic peptide 2 (131 aa).

The signal sequence occupies residues 1–22; that stretch reads MLYPALLCAALLLIAPLGHTEG. The propeptide occupies 23–109; it reads RTLYPSPDAI…KRAVTDRSRR (87 aa). Cys-115 and Cys-131 form a disulfide bridge.

It belongs to the natriuretic peptide family. Expressed in brain and to a low extent in atrium.

Its subcellular location is the secreted. Exhibits natriuretic and vasodepressor activity. Has a cGMP-stimulating activity. The protein is C-type natriuretic peptide 2 of Oncorhynchus mykiss (Rainbow trout).